A 493-amino-acid chain; its full sequence is Glutamyl-tRNA(Gln) amidotransferase subunit A (493 aa).

Active-site charge relay system residues include lysine 78 and serine 159. The Acyl-ester intermediate role is filled by serine 183.

Belongs to the amidase family. GatA subfamily. As to quaternary structure, heterotrimer of A, B and C subunits.

The enzyme catalyses L-glutamyl-tRNA(Gln) + L-glutamine + ATP + H2O = L-glutaminyl-tRNA(Gln) + L-glutamate + ADP + phosphate + H(+). In terms of biological role, allows the formation of correctly charged Gln-tRNA(Gln) through the transamidation of misacylated Glu-tRNA(Gln) in organisms which lack glutaminyl-tRNA synthetase. The reaction takes place in the presence of glutamine and ATP through an activated gamma-phospho-Glu-tRNA(Gln). The protein is Glutamyl-tRNA(Gln) amidotransferase subunit A of Sphingopyxis alaskensis (strain DSM 13593 / LMG 18877 / RB2256) (Sphingomonas alaskensis).